The primary structure comprises 652 residues: ATP-binding cassette sub-family G member 5 (652 aa).

Positions 1–25 (MGELPFLSPEGARGPHINRGSLSSL) are disordered. The Cytoplasmic portion of the chain corresponds to 1–384 (MGELPFLSPE…RVTRNLMRNK (384 aa)). In terms of domain architecture, ABC transporter spans 39–294 (LGVLHVSYSV…FNNCGYPCPE (256 aa)). Cysteine 61 carries S-palmitoyl cysteine lipidation. 87 to 94 (GSSGSGKT) is an ATP binding site. Residues 385-405 (QAVIMRLVQNLIMGLFLIFYL) traverse the membrane as a helical segment. Residues 389 to 646 (MRLVQNLIMG…ILGIVIFKVR (258 aa)) form the ABC transmembrane type-2 domain. At 406 to 422 (LRVQNNTLKGAVQDRVG) the chain is on the extracellular side. A glycan (N-linked (GlcNAc...) asparagine) is linked at asparagine 410. The chain crosses the membrane as a helical span at residues 423–443 (LLYQLVGATPYTGMLNAVNLF). The Cytoplasmic portion of the chain corresponds to 444–468 (PMLRAVSDQESQDGLYHKWQMLLAY). A helical membrane pass occupies residues 469–490 (VLHVLPFSVIATVIFSSVCYWT). Residues 491 to 501 (LGLYPEVARFG) are Extracellular-facing. Residues 502–522 (YFSAALLAPHLIGEFLTLVLL) traverse the membrane as a helical segment. Residues 523-529 (GIVQNPN) are Cytoplasmic-facing. The chain crosses the membrane as a helical span at residues 530 to 550 (IVNSIVALLSISGLLIGSGFI). Residues 551–624 (RNIQEMPIPL…PGATSRFTAN (74 aa)) lie on the Extracellular side of the membrane. N-linked (GlcNAc...) asparagine glycans are attached at residues asparagine 585 and asparagine 592. A helical membrane pass occupies residues 625–645 (FLILYGFIPALVILGIVIFKV). Topologically, residues 646 to 652 (RDYLISR) are cytoplasmic.

Belongs to the ABC transporter superfamily. ABCG family. Eye pigment precursor importer (TC 3.A.1.204) subfamily. In terms of assembly, heterodimer with ABCG8. Mg(2+) serves as cofactor. Post-translationally, N-glycosylated. N-glycosylation is important for efficient export out of the endoplasmic reticulum. As to expression, detected in liver and jejunum. Detected on enterocyte villi (at protein level). Expressed in jejunum, ileum and, at lower level, in the liver.

The protein localises to the cell membrane. The protein resides in the apical cell membrane. The enzyme catalyses cholesterol(in) + ATP + H2O = cholesterol(out) + ADP + phosphate + H(+). It catalyses the reaction sitosterol(in) + ATP + H2O = sitosterol(out) + ADP + phosphate + H(+). Its activity is regulated as follows. Cholesterol transport is inhibited by vanadate and by beryllium fluoride. Its function is as follows. ABCG5 and ABCG8 form an obligate heterodimer that mediates Mg(2+)- and ATP-dependent sterol transport across the cell membrane. Plays an essential role in the selective transport of dietary plant sterols and cholesterol in and out of the enterocytes and in the selective sterol excretion by the liver into bile. Required for normal sterol homeostasis. The heterodimer with ABCG8 has ATPase activity. The polypeptide is ATP-binding cassette sub-family G member 5 (Mus musculus (Mouse)).